The following is a 497-amino-acid chain: Glutamyl-tRNA reductase (497 aa).

Substrate-binding positions include T58–R61, S118, E123–Q125, and Q129. Residue C59 is the Nucleophile of the active site. An NADP(+)-binding site is contributed by G214 to A219. Residues V461–T477 show a composition bias toward polar residues. Residues V461 to S486 form a disordered region.

The protein belongs to the glutamyl-tRNA reductase family. As to quaternary structure, homodimer.

It carries out the reaction (S)-4-amino-5-oxopentanoate + tRNA(Glu) + NADP(+) = L-glutamyl-tRNA(Glu) + NADPH + H(+). Its pathway is porphyrin-containing compound metabolism; protoporphyrin-IX biosynthesis; 5-aminolevulinate from L-glutamyl-tRNA(Glu): step 1/2. Catalyzes the NADPH-dependent reduction of glutamyl-tRNA(Glu) to glutamate 1-semialdehyde (GSA). This is Glutamyl-tRNA reductase from Corynebacterium jeikeium (strain K411).